Consider the following 392-residue polypeptide: Iripin-1 (392 aa).

The signal sequence occupies residues methionine 1–alanine 16. 3 N-linked (GlcNAc...) asparagine glycosylation sites follow: asparagine 104, asparagine 196, and asparagine 265.

This sequence belongs to the serpin family. Interacts with human KLKB1. Interacts with human ST14. Interacts with human PLG (plasmin). Highly expressed in salivary gland. Expressed in midgut and ovary.

The protein localises to the secreted. Its function is as follows. Serine protease inhibitor that modulates blood feeding of ticks on vertebrate species. Modestly inhibits human trypsin, plasma kallikrein (KLKB1), matriptase (ST14) and plasmin (PLG) via a classic serpin inhibitory mechanism. Modestly reduces enzymatic activity of human alpha-chymotrypsin, coagulation factor Xa (F10), factor XIIa (F12), cathepsin G (CTSG), tPA/tissue-type plasminogen activator (PLAT) and uPA/urokinase-type plasminogen activator (PLAU). Probably acts as a substrate rather than an inhibitor for the human neutrophil elastase (ELANE) and thus reduces its enzymatic activity in in vitro assays. Decreases expression of adhesion molecules VCAM1 and CD99 on the surface of human cells. Increases the production of chemokines for neutrophils and monocytes, such as KC/CXCL1, MIP-2/CXCL2 and MIP-1/CCL2, and anti-inflammatory cytokine IL10 in mouse inflammation models. Reduces the recruitment of mouse neutrophils and monocytes to the site of inflammation. Decreases expression of CXCR2 on the surface of mouse neutrophils. Increases expression of integrin ITGAM/ITGB2 on the surface of mouse neutrophils. This chain is Iripin-1, found in Ixodes ricinus (Common tick).